The chain runs to 147 residues: Myoglobin (147 aa).

Residues 2–141 form the Globin domain; the sequence is ADFDMVLKCW…IITDMEADYK (140 aa). His60 is a nitrite binding site. Residue His60 participates in O2 binding. Residue His89 participates in heme b binding.

Belongs to the globin family. As to quaternary structure, monomeric.

It localises to the cytoplasm. Its subcellular location is the sarcoplasm. It catalyses the reaction Fe(III)-heme b-[protein] + nitric oxide + H2O = Fe(II)-heme b-[protein] + nitrite + 2 H(+). It carries out the reaction H2O2 + AH2 = A + 2 H2O. Functionally, monomeric heme protein which primary function is to store oxygen and facilitate its diffusion within muscle tissues. Reversibly binds oxygen through a pentacoordinated heme iron and enables its timely and efficient release as needed during periods of heightened demand. Depending on the oxidative conditions of tissues and cells, and in addition to its ability to bind oxygen, it also has a nitrite reductase activity whereby it regulates the production of bioactive nitric oxide. Under stress conditions, like hypoxia and anoxia, it also protects cells against reactive oxygen species thanks to its pseudoperoxidase activity. The polypeptide is Myoglobin (mb) (Channichthys rhinoceratus (Unicorn icefish)).